The following is a 204-amino-acid chain: MNSQPLRVGIGGPVGSGKTALTLALCRALRGRYELAVVTNDIYTQEDAEFLVRNEALAPERIIGVETGGCPHTAIREDASINLEAVERLNRRFPGLDLILVESGGDNLSATFSPELSDLTLYVIDVSAGDKLPRKGGPGICKSDLLVINKIDLAPLVGASLEVMERDARKMRGERPFVFSNQKTGQGLETIVAFIEKQGMLGVA.

Position 12–19 (Gly-12–Thr-19) interacts with GTP.

Belongs to the SIMIBI class G3E GTPase family. UreG subfamily. Homodimer. UreD, UreF and UreG form a complex that acts as a GTP-hydrolysis-dependent molecular chaperone, activating the urease apoprotein by helping to assemble the nickel containing metallocenter of UreC. The UreE protein probably delivers the nickel.

The protein resides in the cytoplasm. In terms of biological role, facilitates the functional incorporation of the urease nickel metallocenter. This process requires GTP hydrolysis, probably effectuated by UreG. This is Urease accessory protein UreG from Azotobacter vinelandii (strain DJ / ATCC BAA-1303).